The following is a 458-amino-acid chain: UPF0210 protein Maeo_1412 (458 aa).

The protein belongs to the UPF0210 family.

The sequence is that of UPF0210 protein Maeo_1412 from Methanococcus aeolicus (strain ATCC BAA-1280 / DSM 17508 / OCM 812 / Nankai-3).